The chain runs to 30 residues: Snaclec coagulation factor IX/factor X-binding protein subunit A (30 aa).

In terms of domain architecture, C-type lectin spans aspartate 1–cysteine 30. An intrachain disulfide couples cysteine 2 to cysteine 13.

The protein belongs to the snaclec family. As to quaternary structure, heterodimer of subunits A and B; disulfide-linked. As to expression, expressed by the venom gland.

It localises to the secreted. Anticoagulant protein which binds to the gamma-carboxyglutamic acid-domain regions of factors IX (F9) and factor X (F10) in the presence of calcium with a 1 to 1 stoichiometry. The chain is Snaclec coagulation factor IX/factor X-binding protein subunit A from Bothrops jararaca (Jararaca).